A 468-amino-acid chain; its full sequence is MSQPTTLYDKIWNDHLVHEAEDGTCLIYIDRHLVHEVTSPQAFEGLRVAGRKVHAPEKTLAVVDHNVPTTDRSKPNPDPESAEQIAALAQNARDFGIEYYNEFDKRQGIVHVIGPEQGFTLPGTTIVCGDSHTSTHGAFGALAHGIGTSEVEHVLATQTLIQKKAKNMRAVVDGKLPDGVTAKDIILAIIGEIGTAGGTGYVLEYAGEAIRALSMEGRMTVCNMSIEGGARAGLIAPDETAYEFLKGRPKAPKGADWDAALRYWETLRSDDGAHFDHEIRLDAAKLPPIVTWGTSPEDVIAVTGKVPDPAAIEDEAKRLSKERALHYMGLLPGTKITDIRLDRVFIGSCTNGRIEDLRAAAKIAEGRTVNGNVSAMVVPGSGLVKEQAEAEGLDKIFTRAGFEWREPGCSMCLAMNPDKLKPDERCASTSNRNFEGRQGFKGRTHLVSPSMAAAAAIAGHFVDIREWR.

[4Fe-4S] cluster contacts are provided by Cys349, Cys409, and Cys412.

It belongs to the aconitase/IPM isomerase family. LeuC type 1 subfamily. In terms of assembly, heterodimer of LeuC and LeuD. The cofactor is [4Fe-4S] cluster.

It catalyses the reaction (2R,3S)-3-isopropylmalate = (2S)-2-isopropylmalate. It participates in amino-acid biosynthesis; L-leucine biosynthesis; L-leucine from 3-methyl-2-oxobutanoate: step 2/4. Functionally, catalyzes the isomerization between 2-isopropylmalate and 3-isopropylmalate, via the formation of 2-isopropylmaleate. In Nitrobacter winogradskyi (strain ATCC 25391 / DSM 10237 / CIP 104748 / NCIMB 11846 / Nb-255), this protein is 3-isopropylmalate dehydratase large subunit.